The following is an 819-amino-acid chain: NEDD4-binding protein 1 (819 aa).

Polar residues predominate over residues Met-1 to Gly-13. Residues Met-1–Val-20 are disordered. One can recognise a KH-like domain in the interval Lys-80–Asp-164. Over residues Asp-226 to Arg-241 the composition is skewed to basic and acidic residues. Disordered regions lie at residues Asp-226–Pro-247 and Lys-666–Arg-736. The region spanning Leu-517–Asp-669 is the RNase NYN domain. Residues Lys-673–Glu-689 are compositionally biased toward polar residues. Residues Arg-772–Asp-819 form a coCUN region.

This sequence belongs to the N4BP1 family.

The protein resides in the cytoplasm. It localises to the cytosol. The protein localises to the nucleus. Its subcellular location is the nucleolus. It is found in the PML body. Its function is as follows. Potent suppressor of cytokine production that acts as a regulator of innate immune signaling and inflammation. Acts as a key negative regulator of select cytokine and chemokine responses elicited by TRIF-independent Toll-like receptors (TLRs), thereby limiting inflammatory cytokine responses to minor insults. Has ribonuclease activity. This Xenopus tropicalis (Western clawed frog) protein is NEDD4-binding protein 1.